The primary structure comprises 144 residues: PE family protein PE9 (144 aa).

The region spanning 1-87 (MSYMIATPAA…RTLTGGCGVF (87 aa)) is the PE domain. Residues 98 to 124 (AAEHRAAGAGRRQRRRRSGDGQWRLRQ) are disordered.

The protein belongs to the mycobacterial PE family. As to quaternary structure, forms a complex with PE10. The complex interacts with human TLR4.

It localises to the secreted. The protein resides in the cell wall. The protein localises to the cell surface. Functionally, together with PE10, induces macrophage apoptosis through human Toll-like receptor 4 (TLR4) signaling pathway. Interaction with TLR4 leads to increased levels of phospho-IRF-3, increase in the transcript levels of IFN-beta and pro-apoptotic genes, up-regulation of IL-10, down-regulation of IL-1b and enhanced levels of macrophage apoptosis. The chain is PE family protein PE9 from Mycobacterium tuberculosis (strain ATCC 25618 / H37Rv).